The chain runs to 441 residues: Probable D-serine dehydratase (441 aa).

Position 101 is an N6-(pyridoxal phosphate)lysine (Lys101).

This sequence belongs to the serine/threonine dehydratase family. DsdA subfamily. Pyridoxal 5'-phosphate is required as a cofactor.

It carries out the reaction D-serine = pyruvate + NH4(+). The polypeptide is Probable D-serine dehydratase (Geobacillus kaustophilus (strain HTA426)).